The primary structure comprises 199 residues: NAD(P)H dehydrogenase (quinone) (199 aa).

One can recognise a Flavodoxin-like domain in the interval 4-190 (VLVLYYSAYG…AGARYQGRVI (187 aa)). Residues 10–15 (SAYGHI) and 78–80 (TRF) contribute to the FMN site. An NAD(+)-binding site is contributed by Tyr-12. Trp-98 contacts substrate. Residues 113–119 (STATQHG) and His-134 contribute to the FMN site.

It belongs to the WrbA family. The cofactor is FMN.

The enzyme catalyses a quinone + NADH + H(+) = a quinol + NAD(+). The catalysed reaction is a quinone + NADPH + H(+) = a quinol + NADP(+). The sequence is that of NAD(P)H dehydrogenase (quinone) from Bradyrhizobium sp. (strain ORS 278).